Reading from the N-terminus, the 75-residue chain is Small ribosomal subunit protein bS18 (75 aa).

It belongs to the bacterial ribosomal protein bS18 family. As to quaternary structure, part of the 30S ribosomal subunit. Forms a tight heterodimer with protein bS6.

Its function is as follows. Binds as a heterodimer with protein bS6 to the central domain of the 16S rRNA, where it helps stabilize the platform of the 30S subunit. This is Small ribosomal subunit protein bS18 from Shewanella baltica (strain OS223).